We begin with the raw amino-acid sequence, 127 residues long: Large-conductance mechanosensitive channel (127 aa).

3 consecutive transmembrane segments (helical) span residues 19-39 (VGVIVGAAFTAIVNSLVTNII), 42-62 (LLGIFVGSIDFSNLVFTVGSA), and 67-87 (GAFINSVINFLIIAFVVFLLI).

Belongs to the MscL family. In terms of assembly, homopentamer.

The protein localises to the cell membrane. Its function is as follows. Channel that opens in response to stretch forces in the membrane lipid bilayer. May participate in the regulation of osmotic pressure changes within the cell. This chain is Large-conductance mechanosensitive channel, found in Levilactobacillus brevis (strain ATCC 367 / BCRC 12310 / CIP 105137 / JCM 1170 / LMG 11437 / NCIMB 947 / NCTC 947) (Lactobacillus brevis).